A 196-amino-acid chain; its full sequence is Peptidyl-tRNA hydrolase (196 aa).

Tyr14 serves as a coordination point for tRNA. His19 acts as the Proton acceptor in catalysis. TRNA contacts are provided by Tyr64, Asn66, and Asn112.

The protein belongs to the PTH family. Monomer.

The protein resides in the cytoplasm. It catalyses the reaction an N-acyl-L-alpha-aminoacyl-tRNA + H2O = an N-acyl-L-amino acid + a tRNA + H(+). Hydrolyzes ribosome-free peptidyl-tRNAs (with 1 or more amino acids incorporated), which drop off the ribosome during protein synthesis, or as a result of ribosome stalling. In terms of biological role, catalyzes the release of premature peptidyl moieties from peptidyl-tRNA molecules trapped in stalled 50S ribosomal subunits, and thus maintains levels of free tRNAs and 50S ribosomes. This Methylocella silvestris (strain DSM 15510 / CIP 108128 / LMG 27833 / NCIMB 13906 / BL2) protein is Peptidyl-tRNA hydrolase.